The primary structure comprises 234 residues: VIGGDECNINEHRSLVAFFNSTGFFCSGTLVNEEWVLSAAHCDSTNFQMKLGVHSKKVLNEDEQTRNPKEKFICPNKKNDEVLDKDIMLIKLDSRVSNSEHIAPLSLPSSPPSVGSVCHIMGWGSITPIKETYPDVPYCANINLLDDEVCQAGYPELLAEYRTLCAGILEGGKDTCGGDSGGPLICNGQFQGIVSYGAHPCGQSLKPGIYTKVFDYSDWIQSIIAGNTDASCPP.

Residues 1–225 enclose the Peptidase S1 domain; the sequence is VIGGDECNIN…YSDWIQSIIA (225 aa). Disulfide bonds link cysteine 7-cysteine 139, cysteine 26-cysteine 42, cysteine 74-cysteine 232, cysteine 118-cysteine 186, cysteine 150-cysteine 165, and cysteine 176-cysteine 201. The N-linked (GlcNAc...) asparagine glycan is linked to asparagine 20. Catalysis depends on charge relay system residues histidine 41 and aspartate 86. Serine 180 functions as the Charge relay system in the catalytic mechanism.

This sequence belongs to the peptidase S1 family. Snake venom subfamily. Monomer. Expressed by the venom gland.

It localises to the secreted. Its function is as follows. Bradykinin-releasing enzyme. Releases bradykinin from bovine HMW kininogen. Has anticoagulant activity. Increases permeability of capillaries by intradermal injection into rabbits. This chain is Bradykinin-releasing enzyme KR-E-1, found in Gloydius ussuriensis (Ussuri mamushi).